Reading from the N-terminus, the 258-residue chain is Phosphonates import ATP-binding protein PhnC 3 (258 aa).

The 245-residue stretch at 2–246 folds into the ABC transporter domain; it reads IEFKNVSLVY…TFEEIYGRKI (245 aa). Residue 35–42 coordinates ATP; that stretch reads GLSGAGKS.

This sequence belongs to the ABC transporter superfamily. Phosphonates importer (TC 3.A.1.9.1) family. In terms of assembly, the complex is composed of two ATP-binding proteins (PhnC), two transmembrane proteins (PhnE) and a solute-binding protein (PhnD).

The protein localises to the cell membrane. It carries out the reaction phosphonate(out) + ATP + H2O = phosphonate(in) + ADP + phosphate + H(+). Its function is as follows. Part of the ABC transporter complex PhnCDE involved in phosphonates import. Responsible for energy coupling to the transport system. This chain is Phosphonates import ATP-binding protein PhnC 3, found in Halalkalibacterium halodurans (strain ATCC BAA-125 / DSM 18197 / FERM 7344 / JCM 9153 / C-125) (Bacillus halodurans).